Reading from the N-terminus, the 359-residue chain is DNA polymerase IV (359 aa).

One can recognise a UmuC domain in the interval 4–185 (IIHIDMDCYF…LSLRKIPGVG (182 aa)). Residues Asp-8 and Asp-103 each contribute to the Mg(2+) site. Glu-104 is an active-site residue.

Belongs to the DNA polymerase type-Y family. In terms of assembly, monomer. The cofactor is Mg(2+).

It is found in the cytoplasm. It carries out the reaction DNA(n) + a 2'-deoxyribonucleoside 5'-triphosphate = DNA(n+1) + diphosphate. Its function is as follows. Poorly processive, error-prone DNA polymerase involved in untargeted mutagenesis. Copies undamaged DNA at stalled replication forks, which arise in vivo from mismatched or misaligned primer ends. These misaligned primers can be extended by PolIV. Exhibits no 3'-5' exonuclease (proofreading) activity. May be involved in translesional synthesis, in conjunction with the beta clamp from PolIII. The protein is DNA polymerase IV of Shewanella sp. (strain MR-4).